Reading from the N-terminus, the 404-residue chain is Synaptic vesicle membrane protein VAT-1 homolog (404 aa).

The tract at residues 1–55 (MSAEREATEAATVAAAAEARAETGAGEGAPSQPPTVEVASDPQPPPAPEASASAS) is disordered. At Ser2 the chain carries N-acetylserine. Phosphoserine is present on Ser2. Low complexity predominate over residues 9-24 (EAATVAAAAEARAETG). 2 positions are modified to phosphoserine: Ser31 and Ser40.

The protein belongs to the zinc-containing alcohol dehydrogenase family. Quinone oxidoreductase subfamily. Interacts with MFN1 and MFN2. In terms of tissue distribution, ubiquitously expressed.

The protein resides in the cytoplasm. Its subcellular location is the mitochondrion outer membrane. Its function is as follows. Plays a part in calcium-regulated keratinocyte activation in epidermal repair mechanisms. Has no effect on cell proliferation. Possesses ATPase activity. May negatively regulate mitochondrial fusion. The protein is Synaptic vesicle membrane protein VAT-1 homolog (Vat1) of Rattus norvegicus (Rat).